A 1525-amino-acid chain; its full sequence is Multidrug resistance-associated protein 1 (1525 aa).

Over 1–33 (MGIESLCSADASEPFWDWNLTWHTENPDFTQCF) the chain is Extracellular. A helical transmembrane segment spans residues 34–54 (QNTVLVWVPCIYLWVCFPAYF). Topologically, residues 55–74 (LYLRSHDRGYIQMSILNKAK) are cytoplasmic. A helical membrane pass occupies residues 75–95 (TALGLILWIVCWADLFYSFWE). Residues 96 to 100 (RSQNI) lie on the Extracellular side of the membrane. The helical transmembrane segment at 101–121 (FRAPFFLISPTVLGITMLLAT) threads the bilayer. At 122 to 133 (FLIQHERLKGVQ) the chain is on the cytoplasmic side. The chain crosses the membrane as a helical span at residues 134–154 (SSGVMMIFWLISLLCATVIFR). Over 155-172 (SKIMLALNTDTEVDAFRY) the chain is Extracellular. Residues 173 to 193 (VTFCTYFILLLVQLILSCFPE) traverse the membrane as a helical segment. Over 194-315 (KPPLFSEAVN…RSSEASLSKV (122 aa)) the chain is Cytoplasmic. A helical membrane pass occupies residues 316–336 (LYKTFGPYFLMSFLFKAAHDL). The 284-residue stretch at 324 to 607 (FLMSFLFKAA…LPMVISSIVE (284 aa)) folds into the ABC transmembrane type-1 1 domain. The Extracellular portion of the chain corresponds to 337–362 (LMFTGPEILKLLINFVNNKSAPNWQG). Residues 363 to 383 (YFYTGLLFVCACLQTLILHQY) traverse the membrane as a helical segment. The Cytoplasmic portion of the chain corresponds to 384–439 (FHICFVTGMRLKTAIVGVIYRKALVITNSARKTSTVGEIVNLMSVDAQRFMDLATY). The helical transmembrane segment at 440-460 (INMIWSAPLQVILALYLLWRN) threads the bilayer. Residues 461 to 463 (LGP) are Extracellular-facing. A helical membrane pass occupies residues 464-484 (SVLAGVAVMILLVPINAVMAM). Topologically, residues 485 to 546 (KTKTYQVAQM…VLKKSAYLAA (62 aa)) are cytoplasmic. Residues 547 to 567 (MGTFTWVCAPFLVALSTFAVY) traverse the membrane as a helical segment. At 568-589 (VKVNKNNILDAQKAFVSLALFN) the chain is on the extracellular side. Residues 590–610 (ILRFPLNILPMVISSIVEASV) form a helical membrane-spanning segment. At 611–961 (SLKRLRVFLS…VKATVYWEYM (351 aa)) the chain is on the cytoplasmic side. The region spanning 641–865 (IVVKNATFSW…DGAFAEFLRT (225 aa)) is the ABC transporter 1 domain. Position 675–682 (675–682 (GQVGCGKS)) interacts with ATP. Polar residues-rich tracts occupy residues 871-882 (QSMESSDASSPS) and 908-928 (SNSS…STAE). Disordered regions lie at residues 871-891 (QSME…PVEN) and 908-930 (SNSS…AELQ). A helical membrane pass occupies residues 962-982 (KAIGLYISFLSVFLFMCNHIA). The ABC transmembrane type-1 2 domain occupies 969–1250 (SFLSVFLFMC…LVRMTSDLET (282 aa)). Residues 983 to 1019 (SLASNYWLSLWTDDPVVNGTQQYTNVRLGVYGALGIS) lie on the Extracellular side of the membrane. Residues 1020–1040 (QGIAVFGYSMAVSIGGIFASR) traverse the membrane as a helical segment. Topologically, residues 1041 to 1083 (HLHLDLLHNVLRSPMSFFERTPSGNLVSRFSKEIDTIDSTIPP) are cytoplasmic. The chain crosses the membrane as a helical span at residues 1084–1104 (IIKMFMGSTFNVIGACIIILL). Alanine 1105 is a topological domain (extracellular). Residues 1106–1126 (TPIAAVVIPPLGLVYLLVQRF) traverse the membrane as a helical segment. At 1127-1197 (YVATSRQLKR…VANRWLAVRL (71 aa)) the chain is on the cytoplasmic side. Residues 1198 to 1218 (EFVGNCIVLFAALFAVIARNK) form a helical membrane-spanning segment. Residues 1219-1220 (LS) are Extracellular-facing. A helical transmembrane segment spans residues 1221-1241 (PGLIGLSVSYSLQITAYLNWL). Residues 1242–1525 (VRMTSDLETN…YSMAKDSGLA (284 aa)) lie on the Cytoplasmic side of the membrane. The region spanning 1289–1521 (FRGFGLRYRE…KGLFYSMAKD (233 aa)) is the ABC transporter 2 domain. Position 1321–1328 (1321–1328 (GRTGAGKS)) interacts with ATP.

It belongs to the ABC transporter superfamily. ABCC family. Conjugate transporter (TC 3.A.1.208) subfamily.

The protein localises to the cell membrane. It catalyses the reaction ATP + H2O + xenobioticSide 1 = ADP + phosphate + xenobioticSide 2.. The catalysed reaction is an S-substituted glutathione(in) + ATP + H2O = an S-substituted glutathione(out) + ADP + phosphate + H(+). The enzyme catalyses sphing-4-enine 1-phosphate(in) + ATP + H2O = sphing-4-enine 1-phosphate(out) + ADP + phosphate + H(+). It carries out the reaction leukotriene C4(in) + ATP + H2O = leukotriene C4(out) + ADP + phosphate + H(+). It catalyses the reaction 17beta-estradiol 17-O-(beta-D-glucuronate)(in) + ATP + H2O = 17beta-estradiol 17-O-(beta-D-glucuronate)(out) + ADP + phosphate + H(+). The catalysed reaction is 2',3'-cGAMP(in) + ATP + H2O = 2',3'-cGAMP(out) + ADP + phosphate + H(+). Mediates export of organic anions and drugs from the cytoplasm. Mediates ATP-dependent transport of glutathione and glutathione conjugates, leukotriene C4, estradiol-17-beta-o-glucuronide and other xenobiotics. Hydrolyzes ATP with low efficiency. Mediates ATP-dependent, GSH-independent cyclic GMP-AMP (cGAMP) export. Thus, by limiting intracellular cGAMP concentrations negatively regulates the cGAS-STING pathway. The polypeptide is Multidrug resistance-associated protein 1 (Gallus gallus (Chicken)).